Consider the following 229-residue polypeptide: Putative N-acetylmannosamine-6-phosphate 2-epimerase (229 aa).

It belongs to the NanE family.

The enzyme catalyses an N-acyl-D-glucosamine 6-phosphate = an N-acyl-D-mannosamine 6-phosphate. It functions in the pathway amino-sugar metabolism; N-acetylneuraminate degradation; D-fructose 6-phosphate from N-acetylneuraminate: step 3/5. Its function is as follows. Converts N-acetylmannosamine-6-phosphate (ManNAc-6-P) to N-acetylglucosamine-6-phosphate (GlcNAc-6-P). In Escherichia coli O7:K1 (strain IAI39 / ExPEC), this protein is Putative N-acetylmannosamine-6-phosphate 2-epimerase.